The following is a 425-amino-acid chain: uncharacterized protein (425 aa).

12 helical membrane-spanning segments follow: residues 15-35 (LICAFTGFNSGLPLFVLSQML), 48-68 (LIGAVTGVMLPYGLKFLWAPL), 84-104 (MLLSQVALLILLYIISLFDPL), 107-127 (LGTVANIALLIAFFSATQDIV), 149-169 (INAYRIAGLIPGGLSLYLAAI), 174-194 (TVFLWTALCMLAGIFMTLFLA), 225-245 (VIQAIGFLLFLFLYKFGDSFA), 271-291 (ALWSSILSGLAGGMIMLKLGI), 295-315 (LWLFGLVQMVTIGGFIWLAAF), 331-351 (VVIAAEYIGVGLGTAAFVAFM), 370-390 (LSALPSKVLGILSGYVVGAVG), and 395-415 (FWFCLFLAIPGMLCLFWVAPL).

This sequence to E.coli AmpG and yeast YBR220c.

Its subcellular location is the cell inner membrane. This is an uncharacterized protein from Haemophilus influenzae (strain ATCC 51907 / DSM 11121 / KW20 / Rd).